The following is a 221-amino-acid chain: MISAHVWADAQRLWDFQQMGHEPHPCSVAIGLGSHDLGVAETTAELYHRGMAPVIVFTGATSRTTHERMPRGEAEHYRERAVELGVPERAILVEPNARNTGENIRLSRALLEDLGMPVTSVLLVSKPYEERRAYATARKLWPNVEWVCVSTSMTLPDYVKSIGDARLVIDMLVGAQQRLMVYPRQGFMIKQEIPEPIMTAYEHLRGHGFTSRLVPETAEQT.

Residues 77-96 (YRERAVELGVPERAILVEPN) constitute a DNA-binding region (H-T-H motif).

It to E.coli YdcF.

In terms of biological role, the imp locus inhibits the extrachromosomal maintenance of the streptomyces plasmid SLP1. May function as a transcriptional activator. This is an uncharacterized protein from Streptomyces coelicolor (strain ATCC BAA-471 / A3(2) / M145).